We begin with the raw amino-acid sequence, 407 residues long: Probable beta-1,3-galactosyltransferase 4 (407 aa).

The helical; Signal-anchor for type II membrane protein transmembrane segment at 23 to 39 threads the bilayer; the sequence is WTLFLCIGFFCAGILFS.

Belongs to the glycosyltransferase 31 family. The cofactor is Mn(2+).

It is found in the golgi apparatus membrane. The protein operates within protein modification; protein glycosylation. Beta-1,3-galactosyltransferase that transfers galactose from UDP-galactose to substrates with a terminal glycosyl residue. This chain is Probable beta-1,3-galactosyltransferase 4 (B3GALT4), found in Arabidopsis thaliana (Mouse-ear cress).